A 940-amino-acid polypeptide reads, in one-letter code: Valine--tRNA ligase (940 aa).

Residues 47–57 (PNVTGILHMGH) carry the 'HIGH' region motif. The 'KMSKS' region signature appears at 564-568 (KLSKS). Residue Lys567 participates in ATP binding. The stretch at 872 to 938 (PMEHITKERN…LQSILDKLAS (67 aa)) forms a coiled coil.

The protein belongs to the class-I aminoacyl-tRNA synthetase family. ValS type 1 subfamily. In terms of assembly, monomer.

The protein localises to the cytoplasm. It catalyses the reaction tRNA(Val) + L-valine + ATP = L-valyl-tRNA(Val) + AMP + diphosphate. Catalyzes the attachment of valine to tRNA(Val). As ValRS can inadvertently accommodate and process structurally similar amino acids such as threonine, to avoid such errors, it has a 'posttransfer' editing activity that hydrolyzes mischarged Thr-tRNA(Val) in a tRNA-dependent manner. The polypeptide is Valine--tRNA ligase (Chlamydia caviae (strain ATCC VR-813 / DSM 19441 / 03DC25 / GPIC) (Chlamydophila caviae)).